Consider the following 152-residue polypeptide: MAKRVQVVLNEDILSLGRNGDLVDVAPGYARNFLLPFGKAVPVTPAVMKQVEHRRAKEAERQATLKQDAVAFRTALDTIGRFTVKKQTGGDDVLFGTVTNGDVAEAIESATKKEVDRRDITVPDIHRTGSYKVQVKLHSEVTAEINLEVVSY.

Belongs to the bacterial ribosomal protein bL9 family.

Functionally, binds to the 23S rRNA. This chain is Large ribosomal subunit protein bL9, found in Synechococcus sp. (strain CC9311).